Consider the following 412-residue polypeptide: Palmitoyltransferase ZDHHC11 (412 aa).

Topologically, residues 1-42 are cytoplasmic; sequence MDTRSGSQCSVTPEAILNNEKLVLPPRISRVNGWSLPLHYFQ. Residues 43 to 63 traverse the membrane as a helical segment; that stretch reads VVTWAVFVGLSSATFGIFIPF. The Lumenal portion of the chain corresponds to 64–69; it reads LPHAWK. A helical transmembrane segment spans residues 70–90; the sequence is YIAYVVTGGIFSFHLVVHLIA. Residues 91 to 176 are Cytoplasmic-facing; sequence SCIDPADSNV…YWFFFSTVAS (86 aa). In terms of domain architecture, DHHC spans 125-175; the sequence is QFCHLCKVTVNKKTKHCISCNKCVSGFDHHCKWINNCVGSRNYWFFFSTVA. Cys-155 acts as the S-palmitoyl cysteine intermediate in catalysis. A helical membrane pass occupies residues 177-197; the sequence is ATAGMLCLIAILLYVLVQYLV. Residues 198–230 lie on the Lumenal side of the membrane; that stretch reads NPGVLRTDPRYEDVKNMNTWLLFLPLFPVQVQT. Positions 198–412 are mediates interaction with IRF3 and STING1; the sequence is NPGVLRTDPR…MKTDSAESED (215 aa). Residues 231–251 form a helical membrane-spanning segment; the sequence is LIVVIIGMLVLLLDFLGLVHL. Over 252 to 412 the chain is Cytoplasmic; that stretch reads GQLLIFHIYL…MKTDSAESED (161 aa). The segment at 374-412 is disordered; sequence HPDGGSMAQEADDAPSISTLGLQQETTEPMKTDSAESED. Polar residues predominate over residues 389–400; sequence SISTLGLQQETT. Over residues 401-412 the composition is skewed to basic and acidic residues; it reads EPMKTDSAESED.

The protein belongs to the DHHC palmitoyltransferase family. In terms of assembly, interacts with IRF3 and STING1; in presence of DNA viruses recruits IRF3 to STING1 promoting IRF3 phosphorylation and activation. Expressed in testis.

Its subcellular location is the endoplasmic reticulum membrane. The catalysed reaction is L-cysteinyl-[protein] + hexadecanoyl-CoA = S-hexadecanoyl-L-cysteinyl-[protein] + CoA. Functionally, endoplasmic reticulum-localized palmitoyltransferase that could catalyze the addition of palmitate onto various protein substrates and be involved in a variety of cellular processes. Has a palmitoyltransferase activity toward NCDN and regulates NCDN association with endosome membranes through this palmitoylation. May play a role in cell proliferation. Its function is as follows. Also has a palmitoyltransferase activity-independent function in DNA virus-triggered and CGAS-mediated innate immune response. Functions as an adapter that recruits IRF3 to STING1 to promote the activation of that key transcriptional regulator of type I interferon (IFN)-dependent immune response. The polypeptide is Palmitoyltransferase ZDHHC11 (Homo sapiens (Human)).